The chain runs to 1403 residues: Centrosomal protein of 162 kDa (1403 aa).

The disordered stretch occupies residues Lys18–Lys42. Phosphoserine is present on residues Ser157 and Ser160. The tract at residues Gln170–Glu231 is disordered. The span at Thr208–Glu231 shows a compositional bias: basic and acidic residues. Phosphoserine occurs at positions 474 and 475. The disordered stretch occupies residues Glu476–Ser504. The span at Pro487–Pro502 shows a compositional bias: basic residues. Coiled coils occupy residues Lys617–Tyr670, Val698–Asn1121, Glu1171–Asn1206, and Cys1235–Gln1386.

This sequence belongs to the CEP162 family. In terms of assembly, interacts with CEP290. Interacts with CPNE4. Interacts with alpha-tubulin.

Its subcellular location is the cytoplasm. It is found in the cytoskeleton. The protein resides in the microtubule organizing center. The protein localises to the centrosome. It localises to the centriole. Its subcellular location is the spindle. It is found in the nucleus. Required to promote assembly of the transition zone in primary cilia. Acts by specifically recognizing and binding the axonemal microtubule. Localizes to the distal ends of centrioles before ciliogenesis and directly binds to axonemal microtubule, thereby promoting and restricting transition zone formation specifically at the cilia base. Required to mediate CEP290 association with microtubules. The sequence is that of Centrosomal protein of 162 kDa (CEP162) from Homo sapiens (Human).